Here is a 728-residue protein sequence, read N- to C-terminus: Elongation factor 2 (728 aa).

The tr-type G domain occupies E19–V261. GTP-binding positions include A28–T35, D94–H98, and N148–D151. H596 is modified (diphthamide).

It belongs to the TRAFAC class translation factor GTPase superfamily. Classic translation factor GTPase family. EF-G/EF-2 subfamily.

Its subcellular location is the cytoplasm. Functionally, catalyzes the GTP-dependent ribosomal translocation step during translation elongation. During this step, the ribosome changes from the pre-translocational (PRE) to the post-translocational (POST) state as the newly formed A-site-bound peptidyl-tRNA and P-site-bound deacylated tRNA move to the P and E sites, respectively. Catalyzes the coordinated movement of the two tRNA molecules, the mRNA and conformational changes in the ribosome. In Haloarcula marismortui (strain ATCC 43049 / DSM 3752 / JCM 8966 / VKM B-1809) (Halobacterium marismortui), this protein is Elongation factor 2.